The following is a 174-amino-acid chain: Secretory-abundant heat soluble protein 68234 (174 aa).

The signal sequence occupies residues 1–19 (MARFLVALALFGVVAMTAA). Residues 26–57 (EWSGKPWLGKFVAEVTDKSENWEAFVDALGLP) form an SAHS-c1 region. Residues 72–100 (YKQGDHYHHIFALPDKNFEKDIEFTLGQE) form an SAHS-c2 region. The tract at residues 113–162 (KYSEDGEKLVADVSIPTKGKTIRSEYEVQGDQLIKTYKTGDIVAKKWFKK) is SAHS-c3.

Belongs to the Secretory-abundant heat soluble protein (SAHS) family.

The protein resides in the secreted. Functionally, secreted heat soluble protein acting as a molecular shield in water-deficient condition. Tardigrade-specific intrinsically disordered proteins (TDPs) are essential for desiccation tolerance by forming non-crystalline amorphous solids upon desiccation, and this vitrified state mirrors their protective capabilities. This chain is Secretory-abundant heat soluble protein 68234, found in Hypsibius exemplaris (Freshwater tardigrade).